The sequence spans 211 residues: Redox-sensing transcriptional repressor Rex (211 aa).

A DNA-binding region (H-T-H motif) is located at residues 17–56 (LYYRFVSSLKSKGIDRVNSKAISDALQIDSATIRRDFSYF). An NAD(+)-binding site is contributed by 91–96 (GVGNLG).

Belongs to the transcriptional regulatory Rex family. As to quaternary structure, homodimer.

It is found in the cytoplasm. Functionally, modulates transcription in response to changes in cellular NADH/NAD(+) redox state. The chain is Redox-sensing transcriptional repressor Rex from Staphylococcus aureus (strain Mu3 / ATCC 700698).